The primary structure comprises 487 residues: Complement C1r subcomponent-like protein (487 aa).

Residues 1-35 form the signal peptide; sequence MPGPRVWGKYLWRSPHSKGCPGAMWWLLLWGVLQA. The region spanning 39–163 is the CUB domain; that stretch reads RGSVLLAQEL…KGFLALYQTV (125 aa). Cysteines 94 and 112 form a disulfide. Asparagine 147 and asparagine 166 each carry an N-linked (GlcNAc...) asparagine glycan. Residues 165-230 enclose the Sushi domain; it reads VNYSQPISEA…DGEEVLQCMP (66 aa). The cysteines at positions 195 and 228 are disulfide-linked. N-linked (GlcNAc...) (complex) asparagine glycosylation is present at asparagine 242. In terms of domain architecture, Peptidase S1 spans 245 to 484; sequence TLGSSRAKLG…YVDWIKGVMN (240 aa). The active-site Charge relay system is histidine 283. N-linked (GlcNAc...) asparagine glycosylation is present at asparagine 296. Aspartate 339 acts as the Charge relay system in catalysis. The N-linked (GlcNAc...) asparagine glycan is linked to asparagine 363. Intrachain disulfides connect cysteine 402/cysteine 421 and cysteine 432/cysteine 462. The Charge relay system role is filled by serine 436.

This sequence belongs to the peptidase S1 family. As to expression, highly expressed in placenta, liver, kidney, pancreas, moderately in lung, spleen, prostate, ovary, colon, and PBL, and weakly in heart, skeletal muscle, thymus, testis, and small intestine. Expressed in PC-3 (prostate adenocarcinoma) and SK-OV-3 (ovary adenocarcinoma) cells, but not in LoVo and HT-29 (colon adenocarcinoma), SMMC7721 (hepatocellular carcinoma), CaoV-3 (ovary adenocarcinoma), HeLa (cervix epithelioid carcinoma), MCF-7 (breast adenocarcinoma), U-251MG (glioma) or A-549 (lung carcinoma) cells. Widely expressed in myeloid leukemia cell lines, including K-562 (chronic myelogenous leukemia), THP-1 (myelomonocytic leukemia), HL-60 and NB4 (promyelocytic leukemia), and KG-1 (acute myelogenous leukemia) cells. Expressed mainly in the liver and in serum (at protein level).

It localises to the secreted. Functionally, mediates the proteolytic cleavage of HP/haptoglobin in the endoplasmic reticulum. In Homo sapiens (Human), this protein is Complement C1r subcomponent-like protein (C1RL).